The following is a 311-amino-acid chain: Lipoyl synthase (311 aa).

Residues cysteine 36, cysteine 41, cysteine 47, cysteine 66, cysteine 70, cysteine 73, and serine 280 each contribute to the [4Fe-4S] cluster site. Residues 51-269 (RDGPGTATFM…RVAESEFGFL (219 aa)) enclose the Radical SAM core domain.

This sequence belongs to the radical SAM superfamily. Lipoyl synthase family. The cofactor is [4Fe-4S] cluster.

Its subcellular location is the cytoplasm. It carries out the reaction [[Fe-S] cluster scaffold protein carrying a second [4Fe-4S](2+) cluster] + N(6)-octanoyl-L-lysyl-[protein] + 2 oxidized [2Fe-2S]-[ferredoxin] + 2 S-adenosyl-L-methionine + 4 H(+) = [[Fe-S] cluster scaffold protein] + N(6)-[(R)-dihydrolipoyl]-L-lysyl-[protein] + 4 Fe(3+) + 2 hydrogen sulfide + 2 5'-deoxyadenosine + 2 L-methionine + 2 reduced [2Fe-2S]-[ferredoxin]. The protein operates within protein modification; protein lipoylation via endogenous pathway; protein N(6)-(lipoyl)lysine from octanoyl-[acyl-carrier-protein]: step 2/2. Its function is as follows. Catalyzes the radical-mediated insertion of two sulfur atoms into the C-6 and C-8 positions of the octanoyl moiety bound to the lipoyl domains of lipoate-dependent enzymes, thereby converting the octanoylated domains into lipoylated derivatives. The protein is Lipoyl synthase of Halobacterium salinarum (strain ATCC 29341 / DSM 671 / R1).